Reading from the N-terminus, the 118-residue chain is Aspartate 1-decarboxylase 1 (118 aa).

The active-site Schiff-base intermediate with substrate; via pyruvic acid is Ser25. Ser25 carries the pyruvic acid (Ser) modification. Thr57 is a substrate binding site. Tyr58 acts as the Proton donor in catalysis. 73 to 75 (GAA) serves as a coordination point for substrate.

The protein belongs to the PanD family. In terms of assembly, heterooctamer of four alpha and four beta subunits. Pyruvate is required as a cofactor. Post-translationally, is synthesized initially as an inactive proenzyme, which is activated by self-cleavage at a specific serine bond to produce a beta-subunit with a hydroxyl group at its C-terminus and an alpha-subunit with a pyruvoyl group at its N-terminus.

It is found in the cytoplasm. The enzyme catalyses L-aspartate + H(+) = beta-alanine + CO2. It participates in cofactor biosynthesis; (R)-pantothenate biosynthesis; beta-alanine from L-aspartate: step 1/1. In terms of biological role, catalyzes the pyruvoyl-dependent decarboxylation of aspartate to produce beta-alanine. This chain is Aspartate 1-decarboxylase 1, found in Gloeobacter violaceus (strain ATCC 29082 / PCC 7421).